Here is a 461-residue protein sequence, read N- to C-terminus: Signal recognition particle receptor FtsY (461 aa).

The TPR repeat unit spans residues 105–138 (FESLYNVAKIYHQLEKPDKALEYAQRAEKLVPYE). Residues 267–274 (GVNGSGKT), 349–353 (DTAGR), and 413–416 (TKLD) each bind GTP.

It belongs to the GTP-binding SRP family. FtsY subfamily. Part of the signal recognition particle protein translocation system, which is composed of SRP and FtsY.

It localises to the cell inner membrane. It is found in the cytoplasm. The enzyme catalyses GTP + H2O = GDP + phosphate + H(+). Involved in targeting and insertion of nascent membrane proteins into the cytoplasmic membrane. Acts as a receptor for the complex formed by the signal recognition particle (SRP) and the ribosome-nascent chain (RNC). This chain is Signal recognition particle receptor FtsY, found in Aquifex aeolicus (strain VF5).